The following is a 148-amino-acid chain: Large ribosomal subunit protein bL9 (148 aa).

The protein belongs to the bacterial ribosomal protein bL9 family.

In terms of biological role, binds to the 23S rRNA. The chain is Large ribosomal subunit protein bL9 from Staphylococcus aureus (strain Newman).